A 98-amino-acid polypeptide reads, in one-letter code: Cell division topological specificity factor (98 aa).

It belongs to the MinE family.

Its function is as follows. Prevents the cell division inhibition by proteins MinC and MinD at internal division sites while permitting inhibition at polar sites. This ensures cell division at the proper site by restricting the formation of a division septum at the midpoint of the long axis of the cell. The sequence is that of Cell division topological specificity factor from Nitrosomonas europaea (strain ATCC 19718 / CIP 103999 / KCTC 2705 / NBRC 14298).